The sequence spans 80 residues: uncharacterized protein (80 aa).

Positions 1-15 are cleaved as a signal peptide; that stretch reads MEVIVVIVVIVVVIA. The segment covering 23 to 44 has biased composition (low complexity); the sequence is NSNSNSNNSSDSSNESNNSDSS. The interval 23–52 is disordered; that stretch reads NSNSNSNNSSDSSNESNNSDSSKNGGSDIY. Asn-29, Asn-30, Asn-36, Asn-39, and Asn-64 each carry an N-linked (GlcNAc...) asparagine glycan.

It is found in the secreted. This is an uncharacterized protein from Dictyostelium discoideum (Social amoeba).